Here is a 174-residue protein sequence, read N- to C-terminus: Chromophore lyase CpcS/CpeS 1 (174 aa).

Belongs to the CpcS/CpeS biliprotein lyase family.

Functionally, covalently attaches a chromophore to Cys residue(s) of phycobiliproteins. The chain is Chromophore lyase CpcS/CpeS 1 from Trichodesmium erythraeum (strain IMS101).